A 64-amino-acid chain; its full sequence is Peptide Ctri9677 (64 aa).

An N-terminal signal peptide occupies residues 1 to 22; the sequence is MKNNTILFTFLIVFLIASQIEA. Leu36 carries the post-translational modification Leucine amide. A propeptide spanning residues 40 to 64 is cleaved from the precursor; it reads SEDREFFDFFTDDNLAALEKALKEY.

This sequence belongs to the non-disulfide-bridged peptide (NDBP) superfamily. Short antimicrobial peptide (group 4) family. Expressed by the venom gland.

The protein localises to the secreted. Functionally, antimicrobial peptide. The polypeptide is Peptide Ctri9677 (Chaerilus tricostatus (Scorpion)).